The following is a 490-amino-acid chain: Cytochrome P450 71A25 (490 aa).

Residues M1–K21 traverse the membrane as a helical segment. C431 is a binding site for heme.

Belongs to the cytochrome P450 family. Heme serves as cofactor.

The protein localises to the membrane. The protein is Cytochrome P450 71A25 (CYP71A25) of Arabidopsis thaliana (Mouse-ear cress).